Reading from the N-terminus, the 407-residue chain is tRNA pseudouridine synthase Pus10 (407 aa).

Residue Asp-232 is the Nucleophile of the active site. Residues Tyr-300 and Tyr-369 each coordinate substrate.

Belongs to the pseudouridine synthase Pus10 family.

The catalysed reaction is uridine(54) in tRNA = pseudouridine(54) in tRNA. It carries out the reaction uridine(55) in tRNA = pseudouridine(55) in tRNA. Responsible for synthesis of pseudouridine from uracil-54 and uracil-55 in the psi GC loop of transfer RNAs. This is tRNA pseudouridine synthase Pus10 from Methanosphaera stadtmanae (strain ATCC 43021 / DSM 3091 / JCM 11832 / MCB-3).